A 170-amino-acid chain; its full sequence is Bifunctional protein PyrR (170 aa).

Positions 90–102 (LVLVDDVLMSGRT) match the PRPP-binding motif.

It belongs to the purine/pyrimidine phosphoribosyltransferase family. PyrR subfamily.

The catalysed reaction is UMP + diphosphate = 5-phospho-alpha-D-ribose 1-diphosphate + uracil. In terms of biological role, regulates the transcription of the pyrimidine nucleotide (pyr) operon in response to exogenous pyrimidines. Its function is as follows. Also displays a weak uracil phosphoribosyltransferase activity which is not physiologically significant. The polypeptide is Bifunctional protein PyrR (Pseudomonas paraeruginosa (strain DSM 24068 / PA7) (Pseudomonas aeruginosa (strain PA7))).